Consider the following 1782-residue polypeptide: MTSLKRSQTERPVTADRASVVSTDGAPKVHTDDFYMRRFRSQNGSLGSSVMAAVGPPRSEGPHHITSTPGVPKMGVRARIADWPPRKENVKESSRSSQEIETSSCLESLSSKGSPVSQGSSVSLNSNDSAMLKSIQNTLKNKTGPAESMDSRFLMPEAYPSSPRKALRRIRQRSNSDITISELDVDSFDECISPTYKSGPSLHREYGSTSSIDKQGTSGDSFFDLLKGYKDDRSDRGPTPTKLSDFLITGGGKGSGFSLDVIDGPISQRENLRLFKEREKPLKRRSKSETGDSSIFRKLRNAKGEELGKSSDLEDNRSEDSVRPWTCPKCFAHYDVQSILFDLNEAIMNRHNVIKRRNTTTGASAAAVASLVSGPLSHSASFSSPMGSTEDLNSKGSLGMDQGDDKSNELVMSCPYFRNEIGGEGERKISLSKSNSGSFSGCESTSFESALSSHCTNAGVAVLEVPKESLMLHLDRVKRYTVEHVDLGAYYYRKFFYQKEHWNYFGADENLGPVAVSIRREKPEDMKENGSPYNYRIIFRTSELMTLRGSVLEDAIPSTAKHSTARGLPLKEVLEHVIPELNVQCLRLAFNTPKVTEQLMKLDEQGLNYQQKVGIMYCKAGQSTEEEMYNNESAGPAFEEFLQLLGERVRLKGFEKYRAQLDTKTDSTGTHSLYTTYKDYEIMFHVSTMLPYTPNNKQQLLRKRHIGNDIVTIVFQEPGAQPFSPKNIRSHFQHVFVIVRAHNPCTESVCYSVAVTRSRDVPSFGPPIPKGVTFPKSNVFRDFLLAKVINAENAAHKSEKFRAMATRTRQEYLKDLAEKNVTNTPIDPSGKFPFISLASKKKEKSKPYPGAELSSMGAIVWAVRAKDYNKAMEFDCLLGISSEFIVLIEQETKSVAFNCSCRDVIGWTSSDTSLKIFYERGECVSVESFISGEDIKEIVRRLQFVSKGCESVEMTLRRNGLGQLGFHVNYEGIVADVEPYGYAWQAGLRQGSRLVEICKVAVATLSHEQMIDLLRTSVTVKVVIIPPHDDCTPRRSCSETYRMPVMEYQMNEGISYEFKFPFRNNNKWQRNASKGAHSPQVPSQLQSPMTSRLNAGKGDGKMPPPERAANIPRSISSDGRPLERRLSPGSDIYVTVSSMALARSQCRNSPSNLSSSSETGSGGGTYRQKSMPEGFGVSRRSPASIDRQNTQSDISGSGKSTPSWQRSEDSLADQMEPTCHLPAVSKVLPAFRESPSGRLMRQDPVVHLSPNKQGHSDSHYSSHSSSNTLSSNASSAHSDEKWYDGDRTESDLNSYNYLQGTSADSGIDTASYGPSHGSTASLGASTSSPRSGPGKEKVAPLWHSSSEVLSLADRTLETEGHGMDRKAESSLSLDIHSKSQGGSSPLSRENSTFSINDAASHTSTMSSRHSASPVVFSSARSSPKEELHPTASSQLAPSFSSSSSSSSGPRTFYPRQGATSKYLIGWKKPEGTINSVGFMDTRKRHQSDGNEIAHTRLRASTRDLQASPKPTSKSTIEEDLKKLIDLESPTPESQKNFKFHALSSPQSPFPTTPTSRRALHRTLSDESIYSSQREHFFTSRASLLDQALPNDVLFSSTYPSLPKSLPLRRPSYTLGMKSLHGEFSASDSSLTDIQETRRQPIPDPGLMPLPDAASDLDWSNLVDAAKAYEVQRASFFAASDENHRPLSAASNSDQLEEQALVQMKSYSSKDPSPTLASKVDQLEGMLKMLREDLKKEKEDKAQLQAEVEHLREDNLRLQEESQNASDKLKKFTEWVFNTIDMS.

Disordered regions lie at residues 1 to 28 (MTSL…GAPK), 47 to 125 (GSSV…VSLN), and 140 to 171 (KNKT…RRIR). The segment covering 84-94 (PPRKENVKESS) has biased composition (basic and acidic residues). Residues 95–125 (RSSQEIETSSCLESLSSKGSPVSQGSSVSLN) are compositionally biased toward low complexity. Phosphoserine occurs at positions 162, 187, 193, 208, 255, and 288. The disordered stretch occupies residues 277 to 297 (EREKPLKRRSKSETGDSSIFR). The Rap-GAP domain occupies 599–816 (LMKLDEQGLN…RTRQEYLKDL (218 aa)). In terms of domain architecture, PDZ spans 953-1031 (EMTLRRNGLG…VVIIPPHDDC (79 aa)). Disordered stretches follow at residues 1069-1128 (QRNA…RLSP) and 1144-1213 (SQCR…SLAD). Phosphoserine occurs at positions 1078, 1087, 1116, 1127, 1149, 1170, and 1181. Over residues 1080–1093 (QVPSQLQSPMTSRL) the composition is skewed to polar residues. A compositionally biased stretch (low complexity) spans 1149 to 1159 (SPSNLSSSSET). The span at 1186 to 1205 (DRQNTQSDISGSGKSTPSWQ) shows a compositional bias: polar residues. 2 positions are modified to phosphoserine: Ser-1234 and Ser-1249. Residues 1247–1285 (HLSPNKQGHSDSHYSSHSSSNTLSSNASSAHSDEKWYDG) form a disordered region. Over residues 1261–1276 (SSHSSSNTLSSNASSA) the composition is skewed to low complexity. The residue at position 1305 (Ser-1305) is a Phosphoserine; by PLK2. The interval 1307 to 1342 (IDTASYGPSHGSTASLGASTSSPRSGPGKEKVAPLW) is disordered. Phosphothreonine; by PLK2 is present on Thr-1309. Over residues 1315 to 1328 (SHGSTASLGASTSS) the composition is skewed to low complexity. Ser-1328 bears the Phosphoserine; by CDK5 mark. Ser-1345 is subject to Phosphoserine. Basic and acidic residues predominate over residues 1358–1368 (TEGHGMDRKAE). The disordered stretch occupies residues 1358–1454 (TEGHGMDRKA…SSSGPRTFYP (97 aa)). A phosphoserine mark is found at Ser-1369, Ser-1370, Ser-1391, Ser-1410, and Ser-1412. Polar residues predominate over residues 1378 to 1410 (KSQGGSSPLSRENSTFSINDAASHTSTMSSRHS). The segment covering 1432 to 1447 (SSQLAPSFSSSSSSSS) has biased composition (low complexity). Residues Ser-1507 and Ser-1528 each carry the phosphoserine modification. The residue at position 1530 (Thr-1530) is a Phosphothreonine. Residues Ser-1533, Ser-1544, Ser-1547, Ser-1564, and Ser-1567 each carry the phosphoserine modification. Arg-1580 is modified (asymmetric dimethylarginine). Residues Ser-1582, Ser-1624, Ser-1626, Ser-1629, Ser-1687, Ser-1690, Ser-1707, Ser-1708, and Ser-1712 each carry the phosphoserine modification. The disordered stretch occupies residues 1625 to 1647 (ASDSSLTDIQETRRQPIPDPGLM). Positions 1713–1773 (PTLASKVDQL…ASDKLKKFTE (61 aa)) form a coiled coil.

In terms of assembly, interacts with DLG4, PDLIM5, PDLIM7 and LZTS3. Interacts with the actin cytoskeleton. Interacts (via PDZ domain) with EPHA4 (via PDZ motif); controls neuronal morphology through regulation of the RAP1 (RAP1A or RAP1B) and RAP2 (RAP2A, RAP2B or RAP2C) GTPases. Post-translationally, ubiquitinated and degraded by the SCF(BTRC) following phosphorylation by PLK2. In terms of processing, phosphorylated at Ser-1328 by CDK5, creating a docking site for the POLO box domains of PLK2. Subsequently, PLK2 binds and phosphorylates SIPA1L1, leading to ubiquitination and degradation by the proteasome.

The protein localises to the cytoplasm. It is found in the cytoskeleton. Its subcellular location is the postsynaptic density. The protein resides in the synapse. It localises to the synaptosome. Its function is as follows. Stimulates the GTPase activity of RAP2A. Promotes reorganization of the actin cytoskeleton and recruits DLG4 to F-actin. Contributes to the regulation of dendritic spine morphogenesis. This is Signal-induced proliferation-associated 1-like protein 1 (Sipa1l1) from Mus musculus (Mouse).